The primary structure comprises 169 residues: Probable chemoreceptor glutamine deamidase CheD (169 aa).

This sequence belongs to the CheD family.

The catalysed reaction is L-glutaminyl-[protein] + H2O = L-glutamyl-[protein] + NH4(+). Probably deamidates glutamine residues to glutamate on methyl-accepting chemotaxis receptors (MCPs), playing an important role in chemotaxis. The polypeptide is Probable chemoreceptor glutamine deamidase CheD (Solibacter usitatus (strain Ellin6076)).